A 406-amino-acid chain; its full sequence is Type IV pilus assembly protein PilC (406 aa).

Transmembrane regions (helical) follow at residues 69-91 (IFSR…LAIL), 171-191 (YPVI…TGIV), 211-231 (FLIA…LLAV), and 377-397 (MIIF…LPLF).

It belongs to the GSP F family. In terms of assembly, homotetramer. Interacts with PilB.

The protein localises to the cell inner membrane. In terms of biological role, essential inner membrane component of the type IV pilus (T4P) that plays a role in surface and host cell adhesion, colonization, biofilm maturation, virulence, and twitching, a form of surface-associated motility facilitated by cycles of extension, adhesion, and retraction of T4P fibers. Controls both pilus assembly and disassembly and plays an important role in PilB localization to the complex and ATPase activity. This Thermus thermophilus (strain ATCC 27634 / DSM 579 / HB8) protein is Type IV pilus assembly protein PilC.